A 316-amino-acid chain; its full sequence is Acetyl-coenzyme A carboxylase carboxyl transferase subunit beta (316 aa).

Positions 39-308 constitute a CoA carboxyltransferase N-terminal domain; the sequence is LWHKCSKCGV…TPPMVLWETM (270 aa). Zn(2+) is bound by residues cysteine 43, cysteine 46, cysteine 62, and cysteine 65. The segment at 43-65 adopts a C4-type zinc-finger fold; that stretch reads CSKCGVLTYTKDLRANQMVCVEC.

Belongs to the AccD/PCCB family. Acetyl-CoA carboxylase is a heterohexamer composed of biotin carboxyl carrier protein (AccB), biotin carboxylase (AccC) and two subunits each of ACCase subunit alpha (AccA) and ACCase subunit beta (AccD). Zn(2+) serves as cofactor.

It is found in the cytoplasm. The enzyme catalyses N(6)-carboxybiotinyl-L-lysyl-[protein] + acetyl-CoA = N(6)-biotinyl-L-lysyl-[protein] + malonyl-CoA. The protein operates within lipid metabolism; malonyl-CoA biosynthesis; malonyl-CoA from acetyl-CoA: step 1/1. Functionally, component of the acetyl coenzyme A carboxylase (ACC) complex. Biotin carboxylase (BC) catalyzes the carboxylation of biotin on its carrier protein (BCCP) and then the CO(2) group is transferred by the transcarboxylase to acetyl-CoA to form malonyl-CoA. This Trichormus variabilis (strain ATCC 29413 / PCC 7937) (Anabaena variabilis) protein is Acetyl-coenzyme A carboxylase carboxyl transferase subunit beta.